A 904-amino-acid polypeptide reads, in one-letter code: Dual specificity tyrosine-phosphorylation-regulated kinase mbk-1 (904 aa).

3 disordered regions span residues 1-151 (MNSG…MPPE), 250-272 (TVGRHTSLDSSGKPKTGKEASSS), and 285-345 (AVPN…YNNG). Positions 9–23 (NLQAWGQQPSSSYSN) are enriched in polar residues. A compositionally biased stretch (low complexity) spans 24-35 (TQQQHGQITGQI). Residues 59-75 (ELEKSKKIAEQPTEHPQ) show a composition bias toward basic and acidic residues. Positions 112–123 (NNSNSQNFFPQQ) are enriched in low complexity. Residues 286 to 297 (VPNTSSSGNQPH) are compositionally biased toward polar residues. Positions 367–690 (ILSDTPVGKG…TLFPVSHTAY (324 aa)) constitute a Protein kinase domain. ATP-binding positions include 373-381 (VGKGSFGQV) and Lys-396. The active-site Proton acceptor is Asp-495. Disordered regions lie at residues 717–830 (YRPV…DQAE) and 881–904 (MSHGNVNAGSSRDMEKHDYPNNKL). A compositionally biased stretch (polar residues) spans 721–733 (PTSSHPISVTSSF). Residues 749 to 820 (SQQNYHNPNY…VQQHSSSSSR (72 aa)) are compositionally biased toward low complexity. Over residues 881 to 890 (MSHGNVNAGS) the composition is skewed to polar residues. A compositionally biased stretch (basic and acidic residues) spans 892–904 (RDMEKHDYPNNKL).

Belongs to the protein kinase superfamily. CMGC Ser/Thr protein kinase family. MNB/DYRK subfamily. It depends on Mg(2+) as a cofactor.

It is found in the nucleus. The enzyme catalyses L-seryl-[protein] + ATP = O-phospho-L-seryl-[protein] + ADP + H(+). The catalysed reaction is L-threonyl-[protein] + ATP = O-phospho-L-threonyl-[protein] + ADP + H(+). It carries out the reaction L-tyrosyl-[protein] + ATP = O-phospho-L-tyrosyl-[protein] + ADP + H(+). Functionally, possible role in the function of olfactory neurons. The chain is Dual specificity tyrosine-phosphorylation-regulated kinase mbk-1 from Caenorhabditis briggsae.